The following is a 196-amino-acid chain: Phosphoheptose isomerase (196 aa).

Positions 34-196 (MVQCLLGGKK…DRTLFPQDEA (163 aa)) constitute an SIS domain. 49 to 51 (NGG) is a binding site for substrate. Histidine 58 and glutamate 62 together coordinate Zn(2+). Substrate contacts are provided by residues glutamate 62, 91-92 (ND), 117-119 (STS), serine 122, and glutamine 172. The Zn(2+) site is built by glutamine 172 and histidine 180.

It belongs to the SIS family. GmhA subfamily. As to quaternary structure, homotetramer. The cofactor is Zn(2+).

The protein localises to the cytoplasm. The enzyme catalyses 2 D-sedoheptulose 7-phosphate = D-glycero-alpha-D-manno-heptose 7-phosphate + D-glycero-beta-D-manno-heptose 7-phosphate. The protein operates within carbohydrate biosynthesis; D-glycero-D-manno-heptose 7-phosphate biosynthesis; D-glycero-alpha-D-manno-heptose 7-phosphate and D-glycero-beta-D-manno-heptose 7-phosphate from sedoheptulose 7-phosphate: step 1/1. Functionally, catalyzes the isomerization of sedoheptulose 7-phosphate in D-glycero-D-manno-heptose 7-phosphate. The protein is Phosphoheptose isomerase of Shewanella denitrificans (strain OS217 / ATCC BAA-1090 / DSM 15013).